Reading from the N-terminus, the 435-residue chain is MIWKRSAVLRFYSVCGLLLQGSQGQFPLTQNVTVVEGGTAILTCRVDQNDNTSLQWSNPAQQTLYFDDKKALRDNRIELVRASWHELSISVSDVSLSDEGQYTCSLFTMPVKTSKAYLTVLGVPEKPQISGFSSPVMEGDLMQLTCKTSGSKPAADIRWFKNDKEIKDVKYLKEEDANRKTFTVSSTLDFRVDRSDDGVAVICRVDHESLNATPQVAMQVLEIHYTPSVKIIPSTPFPQEGQALTLTCESKGKPLPEPVLWTKDGAELPDPDRMVVSGRELNILFLNKTDNGTYRCEATNTIGQSSAEYVLIVHDVPNTLLPTTIIPSLTTAPVTTSVTITTSPSTSASSSSRRDPNSLAGQNGPDHALIGGIVAVVVFVTLCSIFLLGRYLARHKGTYLTNEAKGAEDAPDADTAIINAEGSQVNAEEKKEYFI.

Residues 1–24 form the signal peptide; the sequence is MIWKRSAVLRFYSVCGLLLQGSQG. The Extracellular segment spans residues 25–367; it reads QFPLTQNVTV…SLAGQNGPDH (343 aa). One can recognise an Ig-like V-type domain in the interval 27–119; it reads PLTQNVTVVE…PVKTSKAYLT (93 aa). Residues asparagine 31 and asparagine 51 are each glycosylated (N-linked (GlcNAc...) asparagine). Cystine bridges form between cysteine 44/cysteine 104, cysteine 146/cysteine 203, and cysteine 248/cysteine 296. 2 consecutive Ig-like C2-type domains span residues 127 to 219 and 227 to 312; these read PQIS…VAMQ and PSVK…YVLI. N-linked (GlcNAc...) asparagine glycosylation occurs at asparagine 291. A compositionally biased stretch (low complexity) spans 337-351; it reads SVTITTSPSTSASSS. The tract at residues 337-360 is disordered; the sequence is SVTITTSPSTSASSSSRRDPNSLA. Residues 368 to 388 traverse the membrane as a helical segment; sequence ALIGGIVAVVVFVTLCSIFLL. Topologically, residues 389 to 435 are cytoplasmic; sequence GRYLARHKGTYLTNEAKGAEDAPDADTAIINAEGSQVNAEEKKEYFI. Serine 423 carries the post-translational modification Phosphoserine.

It belongs to the nectin family. Post-translationally, glycosylation at Asn-51 reduces adhesive binding.

The protein resides in the cell membrane. It localises to the synapse. Its subcellular location is the cell projection. The protein localises to the axon. In terms of biological role, adhesion molecule that engages in homo- and heterophilic interactions with the other nectin-like family members, leading to cell aggregation. Important for synapse organization, providing regulated trans-synaptic adhesion. Preferentially binds to oligodendrocytes. The protein is Cell adhesion molecule 2 (Cadm2) of Mus musculus (Mouse).